We begin with the raw amino-acid sequence, 313 residues long: tRNA uridine(34) hydroxylase (313 aa).

In terms of domain architecture, Rhodanese spans 124 to 218 (SDPEVLLIDT…YLEEVPQEET (95 aa)). C178 acts as the Cysteine persulfide intermediate in catalysis.

It belongs to the TrhO family.

The enzyme catalyses uridine(34) in tRNA + AH2 + O2 = 5-hydroxyuridine(34) in tRNA + A + H2O. In terms of biological role, catalyzes oxygen-dependent 5-hydroxyuridine (ho5U) modification at position 34 in tRNAs. This is tRNA uridine(34) hydroxylase from Pseudomonas fluorescens (strain SBW25).